A 431-amino-acid polypeptide reads, in one-letter code: MLQFSFQNCKTHTCYMNTSVNEHLDQDESFLRILIDTRKKIRSSYFKPQTFDEFVHCLARVRAMKRLVSICSNFDEEDNWNGVWNTLVVDGDSHASAMIDYEGLLDKCSLSRNLLELINDYAEYTTQVLPFRKIPSSDNLDSSLNLTVASPKSNLYYRYSSESPKYAKILDCPDEILQLIFSYCYDASYIEKLPFAFSYRKQRHTLIHDLPNTCLRFKKILSPRNVSFWKRLLKVHKKNPNSAVTCSESINTSAVAKFTDIPTIIPIFLDPSYQSYAAKTIHSDTSSLASSIIQTGDGTQSCDESTYIELACNLVGRCVLCNRIPKLTKFKDCITSFYRPSVATNICDQCLEAIIDFYEPVSRYKFDVMKDRLGVGYISRPGQKFPSWLSEHVQLARDEEKAFKSIYHSQGEFARSLFRLFRAQLAELCEQ.

One can recognise an F-box; atypical domain in the interval 172–186 (CPDEILQLIFSYCYD).

Component of the E3 ubiquitin ligase Skp1-Cullin-1-F-box (SCF) complex. Interacts with skp1, cul1 and erg9.

Its subcellular location is the cytoplasm. The protein localises to the nucleus. The protein resides in the endoplasmic reticulum. Expression is induced during oxidative stress. Plays an essential, SCF-independent, role in the stress response to hydrogen peroxide for survival, by negatively regulating ergosterol synthesis via direct binding to the squalene synthase erg9. The sequence is that of F-box protein pof14 (pof14) from Schizosaccharomyces pombe (strain 972 / ATCC 24843) (Fission yeast).